Reading from the N-terminus, the 488-residue chain is UDP-N-acetylmuramoyl-L-alanyl-D-glutamate--2,6-diaminopimelate ligase (488 aa).

UDP-N-acetyl-alpha-D-muramoyl-L-alanyl-D-glutamate-binding positions include L24, S26, and 41–43 (HQV). 113-119 (GTNGKTT) is a binding site for ATP. UDP-N-acetyl-alpha-D-muramoyl-L-alanyl-D-glutamate-binding positions include N154, 155-156 (TT), S182, Q188, and R190. An N6-carboxylysine modification is found at K222. Residues R386, 410–413 (DNPR), G461, and E465 contribute to the meso-2,6-diaminopimelate site. A Meso-diaminopimelate recognition motif motif is present at residues 410 to 413 (DNPR).

The protein belongs to the MurCDEF family. MurE subfamily. Mg(2+) is required as a cofactor. Carboxylation is probably crucial for Mg(2+) binding and, consequently, for the gamma-phosphate positioning of ATP.

The protein localises to the cytoplasm. It catalyses the reaction UDP-N-acetyl-alpha-D-muramoyl-L-alanyl-D-glutamate + meso-2,6-diaminopimelate + ATP = UDP-N-acetyl-alpha-D-muramoyl-L-alanyl-gamma-D-glutamyl-meso-2,6-diaminopimelate + ADP + phosphate + H(+). It participates in cell wall biogenesis; peptidoglycan biosynthesis. Its function is as follows. Catalyzes the addition of meso-diaminopimelic acid to the nucleotide precursor UDP-N-acetylmuramoyl-L-alanyl-D-glutamate (UMAG) in the biosynthesis of bacterial cell-wall peptidoglycan. The sequence is that of UDP-N-acetylmuramoyl-L-alanyl-D-glutamate--2,6-diaminopimelate ligase from Haemophilus influenzae (strain ATCC 51907 / DSM 11121 / KW20 / Rd).